Here is a 935-residue protein sequence, read N- to C-terminus: Non-structural polyprotein 1A (935 aa).

Residues 104–142 (KLIHKANALQERLRLSQEEKATLALDVQFLQHENVRLKE) adopt a coiled-coil conformation. The next 4 helical transmembrane spans lie at 239–259 (VFYYIHYYEMWNIFMFVLAIG), 286–306 (VLPTIPFHTTMTLWVMNTLMV), 313–333 (LLAITLAILAPILGIIFLCFM), and 344–364 (GLIATAVLIAGGHACLTLTGT). Residues His461, Asp489, and Ser551 each act as charge relay system; for serine protease activity in the active site. The stretch at 587–620 (VKAPSQVELLKEEIERLKAQLNSATENATTVVTQ) forms a coiled coil. The residue at position 693 (Tyr693) is an O-(5'-phospho-RNA)-tyrosine. 2 disordered regions span residues 756–828 (AKPI…YSQT) and 915–935 (NKAPKNYKGPQKTKGPKTTTH). A compositionally biased stretch (low complexity) spans 922–935 (KGPQKTKGPKTTTH).

This sequence belongs to the astroviridae polyprotein 1A family. As to quaternary structure, monomer. Cleaved by the viral and host proteases. The protease is probably autocatalytically cleaved.

It is found in the host membrane. The catalysed reaction is RNA(n) + a ribonucleoside 5'-triphosphate = RNA(n+1) + diphosphate. Its function is as follows. Responsible for the cleavage of the polyprotein into functional products. Functionally, protein covalently attached to the 5' extremity of the genomic and subgenomic RNAs. It may serve as a primer for the replicase. In Human astrovirus-1 (HAstV-1), this protein is Non-structural polyprotein 1A (ORF1).